The following is a 350-amino-acid chain: Protein RecA (350 aa).

67 to 74 (GPESSGKT) serves as a coordination point for ATP.

The protein belongs to the RecA family.

The protein localises to the cytoplasm. In terms of biological role, can catalyze the hydrolysis of ATP in the presence of single-stranded DNA, the ATP-dependent uptake of single-stranded DNA by duplex DNA, and the ATP-dependent hybridization of homologous single-stranded DNAs. It interacts with LexA causing its activation and leading to its autocatalytic cleavage. In Baumannia cicadellinicola subsp. Homalodisca coagulata, this protein is Protein RecA.